The primary structure comprises 367 residues: Aflatoxin B1 aldehyde reductase member 2 (367 aa).

Low complexity predominate over residues 1 to 31; the sequence is MLRAASRAVGRAAVRSAQRSGTSVGRPLAMS. Residues 1-45 are disordered; sequence MLRAASRAVGRAAVRSAQRSGTSVGRPLAMSRPPPPRAASGAPLR. The transit peptide at 1–46 directs the protein to the mitochondrion; sequence MLRAASRAVGRAAVRSAQRSGTSVGRPLAMSRPPPPRAASGAPLRP. Residue S40 is modified to Phosphoserine. T48 carries the post-translational modification Phosphothreonine. D80 serves as a coordination point for NADP(+). Residue Y85 is the Proton donor of the active site. The residue at position 136 (K136) is an N6-acetyllysine. Position 149 (H149) interacts with substrate. NADP(+) is bound by residues 179–180, Q205, 234–244, and R258; these read SN and NPLAGGLLTGK. K244 carries the post-translational modification N6-succinyllysine. Substrate-binding residues include Y268 and R271. NADP(+) is bound at residue 326–334; that stretch reads SSLEQLEQN. Residue R367 coordinates substrate.

The protein belongs to the aldo/keto reductase family. Aldo/keto reductase 2 subfamily. In terms of assembly, homodimer. Expressed in liver, kidney, testis and brain with low levels in skeletal muscle, spleen, heart and lung.

It localises to the mitochondrion. The protein localises to the golgi apparatus. The protein resides in the cytoplasm. It carries out the reaction 4-hydroxybutanoate + NADP(+) = succinate semialdehyde + NADPH + H(+). With respect to regulation, inhibited by citrate, succinate and tartrate. Catalyzes the NADPH-dependent reduction of succinic semialdehyde to gamma-hydroxybutyrate. May have an important role in producing the neuromodulator gamma-hydroxybutyrate (GHB). Has broad substrate specificity. Can reduce the dialdehyde protein-binding form of aflatoxin B1 (AFB1) to the non-binding AFB1 dialcohol. May be involved in protection of liver against the toxic and carcinogenic effects of AFB1, a potent hepatocarcinogen. This chain is Aflatoxin B1 aldehyde reductase member 2, found in Mus musculus (Mouse).